A 171-amino-acid chain; its full sequence is HTH-type transcriptional regulator AldR (171 aa).

Positions 1-14 are enriched in polar residues; the sequence is MSEGSSITGVQTPG. A disordered region spans residues 1–21; the sequence is MSEGSSITGVQTPGSPKDVRA. Positions 24-85 constitute an HTH asnC-type domain; it reads LDDIDRRILL…DIDPAAVGLG (62 aa). A DNA-binding region (H-T-H motif) is located at residues 43–62; sequence NSALAEMVGIAPSTCHGRVR.

Homodimer in the absence of L-alanine. Homooctamer in the presence of L-alanine. Homotetramers in the presence of L-cysteine.

Its activity is regulated as follows. In the presence of alanine, AldR changes its quaternary structure from a homodimer to an octamer with an open-ring conformation. The binding affinity of AldR for the ald control region is increased significantly by L-alanine. In vitro, L-cysteine also increases the binding affinity of AldR for the target DNA. In terms of biological role, transcriptional regulator that might play a role under hypoxic conditions. Regulates the expression of ald, which encodes L-alanine dehydrogenase. Serves as both an activator for ald expression in the presence of L-alanine and a repressor in the absence of L-alanine. Acts by binding directly to the upstream region of the ald gene. Four AldR-binding sites (O2, O1, O4 and O3) were identified upstream of the ald gene. O2, O1 and O4 are required for the induction of ald expression by alanine, while O3 is directly involved in the repression of ald expression, by occluding the access of RNA polymerase to the ald promoter. In addition to O3, both O1 and O4 are also necessary for full repression of ald expression in the absence of alanine. This chain is HTH-type transcriptional regulator AldR, found in Mycolicibacterium smegmatis (strain ATCC 700084 / mc(2)155) (Mycobacterium smegmatis).